A 652-amino-acid chain; its full sequence is Regulator of DNA class I crossover intermediates 1 (652 aa).

Positions 1-231 form a DNA-binding region, binds DNA containing a D-loop; sequence MNWVGGSRSR…TLFERLNSLG (231 aa). 2 disordered regions span residues 363 to 434 and 469 to 506; these read NKTS…NIPS and KISL…EDQI. Residues 377-388 are compositionally biased toward basic and acidic residues; the sequence is YQREYNKNERND. Residues 389–401 show a composition bias toward polar residues; it reads LSTSFENDYYPSS. Positions 402 to 417 are enriched in basic and acidic residues; it reads SERKEKFENDYQEKTP. The segment covering 473–498 has biased composition (low complexity); sequence DSAQSSRSTSYSPRPTDSCFSSSSDL.

In terms of assembly, interacts with MSH5. Interacts with TEX11.

The protein localises to the chromosome. Its function is as follows. Involved in recombination, probably acting by stabilizing recombination intermediates during meiotic crossover formation. Required for normal germline development and fertility. Required for meiotic progression, complete chromosomal synapsis and crossover formation. Binds double-stranded DNA. However, also binds branched DNA molecules, such as those containing a D-loop or Holliday junction structure. Probably not required for formation of DNA double-strand breaks (DSBs). Also binds RNA in an RNA structure-independent manner, with a preference for binding 3'-UTR regions of mRNAs; may stabilize bound RNAs. This is Regulator of DNA class I crossover intermediates 1 from Homo sapiens (Human).